Here is a 302-residue protein sequence, read N- to C-terminus: O-antigen biosynthesis glycosyltransferase WbnK (302 aa).

It belongs to the glycosyltransferase 11 family.

The enzyme catalyses beta-D-Gal-(1-&gt;3)-alpha-D-GalNAc-(1-&gt;3)-alpha-D-GalNAc-di-trans,octa-cis-undecaprenyl diphosphate + GDP-beta-L-fucose = alpha-L-Fuc-(1-&gt;2)-beta-D-Gal-(1-&gt;3)-alpha-D-GalNAc-(1-&gt;3)-alpha-D-GalNAc-di-trans,octa-cis-undecaprenyl diphosphate + GDP + H(+). It functions in the pathway bacterial outer membrane biogenesis; LPS O-antigen biosynthesis. Functionally, involved in the assembly of the O-repeating unit during O-antigen biosynthesis. The sequence is that of O-antigen biosynthesis glycosyltransferase WbnK from Escherichia coli.